The chain runs to 341 residues: Adhesion protein Bd37 (341 aa).

The N-terminal stretch at 1-21 is a signal peptide; the sequence is MKTSKILNTAAICLLAMGFNG. N-linked (GlcNAc...) asparagine glycans are attached at residues Asn23 and Asn30. Residues Cys26 and Cys307 are joined by a disulfide bond. Residues 36–75 form a disordered region; the sequence is AAANPVVSTPGNDAQQAGTQQGGANSKSVPEQQPQQAAGE. Positions 49-59 are enriched in low complexity; the sequence is AQQAGTQQGGA. Residues 60-75 are compositionally biased toward polar residues; it reads NSKSVPEQQPQQAAGE. The GPI-anchor amidated serine moiety is linked to residue Ser311. Residues 312–341 constitute a propeptide, removed in mature form; sequence GQGSSPKKPSFAAVPSSLSAIVFGIIVSMF.

Post-translationally, the signal sequence is cleaved. Glycosylated. In terms of processing, palmitoylated. Post-translationally, not myristoylated.

Its subcellular location is the cell membrane. The protein localises to the secreted. It localises to the vesicle. In terms of biological role, binds to host erythrocytes. This is Adhesion protein Bd37 from Babesia divergens.